Consider the following 37-residue polypeptide: Large ribosomal subunit protein bL36 (37 aa).

The protein belongs to the bacterial ribosomal protein bL36 family.

This is Large ribosomal subunit protein bL36 from Sulfurihydrogenibium sp. (strain YO3AOP1).